A 953-amino-acid polypeptide reads, in one-letter code: Zinc finger protein 507 (953 aa).

Phosphoserine is present on Ser-95. 3 C2H2-type zinc fingers span residues 125-147 (YQCS…IKQH), 155-185 (LMCS…ANIH), and 248-270 (YRCL…AWKH). At Ser-427 the chain carries Phosphoserine. Residues 470–489 (KGLATDENAPPGRRRTNSES) form a disordered region. C2H2-type zinc fingers lie at residues 641–663 (YRCR…LRVH), 669–691 (YQCP…MIHH), 697–720 (YQCK…REQH), 758–780 (YRCD…RRIH), and 786–808 (YRCS…MWKH). A disordered region spans residues 831–888 (GRVLGKSPGKTQLKSSEESADPVTGSSENAVSSSELMSQTPSEVLGTNENEKLSPTSN). Over residues 854 to 888 (TGSSENAVSSSELMSQTPSEVLGTNENEKLSPTSN) the composition is skewed to polar residues. Residues 911 to 933 (FCCCICGFESTSKENLLDHMKEH) form a C2H2-type 9 zinc finger.

Belongs to the krueppel C2H2-type zinc-finger protein family.

Its subcellular location is the nucleus. In terms of biological role, may be involved in transcriptional regulation. The protein is Zinc finger protein 507 (ZNF507) of Homo sapiens (Human).